Reading from the N-terminus, the 275-residue chain is MWQPPTQNGTQLERHWFESVWRSHAAFCSCGDCIGHLQHLATNLGRPPAPQPPRDQHPPHIRGLPALPAPPSNRNSWPGTGGDAAGGEAGGSRGAGDGGDGELADEDLLDAIALAADPQTQTPQERHPGQRKNARKRLRFSSPTQKTPALDPLQSRNKRRRGGDTGGPGTRTTSPAAPAAATPQSPARVHCPRSPQNQEGAQPPPPTIFPCINKVFMFNPPGPKRITGYEAWRDEYETCKAWNRPPRSFYTDIPTYTWMPKAQDQFRVSFKLGFH.

Disordered stretches follow at residues 44–103 (LGRP…DGEL) and 116–207 (ADPQ…PPPT). Over residues 79–98 (GTGGDAAGGEAGGSRGAGDG) the composition is skewed to gly residues. A compositionally biased stretch (basic residues) spans 129-139 (GQRKNARKRLR). The span at 170–188 (TRTTSPAAPAAATPQSPAR) shows a compositional bias: low complexity.

This Torque teno virus (isolate Human/Finland/Hel32/2002) (TTV) protein is ORF2/4 protein.